Here is a 209-residue protein sequence, read N- to C-terminus: Ribosomal RNA large subunit methyltransferase E (209 aa).

Residues glycine 63, tryptophan 65, aspartate 83, aspartate 99, and aspartate 124 each coordinate S-adenosyl-L-methionine. The Proton acceptor role is filled by lysine 164.

This sequence belongs to the class I-like SAM-binding methyltransferase superfamily. RNA methyltransferase RlmE family.

The protein resides in the cytoplasm. It catalyses the reaction uridine(2552) in 23S rRNA + S-adenosyl-L-methionine = 2'-O-methyluridine(2552) in 23S rRNA + S-adenosyl-L-homocysteine + H(+). Its function is as follows. Specifically methylates the uridine in position 2552 of 23S rRNA at the 2'-O position of the ribose in the fully assembled 50S ribosomal subunit. This is Ribosomal RNA large subunit methyltransferase E from Alkalilimnicola ehrlichii (strain ATCC BAA-1101 / DSM 17681 / MLHE-1).